The following is a 455-amino-acid chain: UDP-N-acetylmuramate--L-alanine ligase (455 aa).

Position 109-115 (Gly109–Thr115) interacts with ATP.

It belongs to the MurCDEF family.

The protein localises to the cytoplasm. The catalysed reaction is UDP-N-acetyl-alpha-D-muramate + L-alanine + ATP = UDP-N-acetyl-alpha-D-muramoyl-L-alanine + ADP + phosphate + H(+). It functions in the pathway cell wall biogenesis; peptidoglycan biosynthesis. In terms of biological role, cell wall formation. This is UDP-N-acetylmuramate--L-alanine ligase from Caldicellulosiruptor saccharolyticus (strain ATCC 43494 / DSM 8903 / Tp8T 6331).